Consider the following 314-residue polypeptide: Olfactory receptor 2Z1 (314 aa).

Residues 1-25 (MGDVNQSVASDFILVGLFSHSGSRQ) lie on the Extracellular side of the membrane. N5 carries an N-linked (GlcNAc...) asparagine glycan. The helical transmembrane segment at 26 to 49 (LLFSLVAVMFVIGLLGNTVLLFLI) threads the bilayer. The Cytoplasmic portion of the chain corresponds to 50 to 57 (RVDSRLHT). Residues 58–79 (PMYFLLSQLSLFDIGCPMVTIP) form a helical membrane-spanning segment. Residues 80–100 (KMASDFLRGEGATSYGGGAAQ) are Extracellular-facing. A helical transmembrane segment spans residues 101 to 120 (IFFLTLMGVAEGVLLVLMSY). The Cytoplasmic segment spans residues 121–139 (DRYVAVCQPLQYPVLMRRQ). Residues 140 to 158 (VCLLMMGSSWVVGVLNASI) form a helical membrane-spanning segment. Residues 159–195 (QTSITLHFPYCASRIVDHFFCEVPALLKLSCADTCAY) are Extracellular-facing. A helical transmembrane segment spans residues 196–219 (EMALSTSGVLILMLPLSLIATSYG). The Cytoplasmic portion of the chain corresponds to 220 to 236 (HVLQAVLSMRSEEARHK). Residues 237-259 (AVTTCSSHITVVGLFYGAAVFMY) traverse the membrane as a helical segment. Residues 260–272 (MVPCAYHSPQQDN) lie on the Extracellular side of the membrane. A helical membrane pass occupies residues 273–292 (VVSLFYSLVTPTLNPLIYSL). Over 293–314 (RNPEVWMALVKVLSRAGLRQMC) the chain is Cytoplasmic.

Belongs to the G-protein coupled receptor 1 family.

The protein localises to the cell membrane. Its function is as follows. Odorant receptor. The sequence is that of Olfactory receptor 2Z1 (OR2Z1) from Homo sapiens (Human).